The sequence spans 305 residues: 4-diphosphocytidyl-2-C-methyl-D-erythritol kinase (305 aa).

K10 is an active-site residue. ATP is bound at residue 95–105 (PVTAGLGGGSS). Residue D136 is part of the active site. The segment at 286–305 (PGVTPWRSPRSASSPSTKRS) is disordered. The span at 290-305 (PWRSPRSASSPSTKRS) shows a compositional bias: low complexity.

It belongs to the GHMP kinase family. IspE subfamily.

It catalyses the reaction 4-CDP-2-C-methyl-D-erythritol + ATP = 4-CDP-2-C-methyl-D-erythritol 2-phosphate + ADP + H(+). It participates in isoprenoid biosynthesis; isopentenyl diphosphate biosynthesis via DXP pathway; isopentenyl diphosphate from 1-deoxy-D-xylulose 5-phosphate: step 3/6. Functionally, catalyzes the phosphorylation of the position 2 hydroxy group of 4-diphosphocytidyl-2C-methyl-D-erythritol. This Anaeromyxobacter sp. (strain Fw109-5) protein is 4-diphosphocytidyl-2-C-methyl-D-erythritol kinase.